Here is a 1409-residue protein sequence, read N- to C-terminus: DNA-directed RNA polymerase subunit beta' (1409 aa).

Residues cysteine 70, cysteine 72, cysteine 85, and cysteine 88 each contribute to the Zn(2+) site. The Mg(2+) site is built by aspartate 458, aspartate 460, and aspartate 462. Positions 813, 887, 894, and 897 each coordinate Zn(2+).

Belongs to the RNA polymerase beta' chain family. As to quaternary structure, the RNAP catalytic core consists of 2 alpha, 1 beta, 1 beta' and 1 omega subunit. When a sigma factor is associated with the core the holoenzyme is formed, which can initiate transcription. Mg(2+) is required as a cofactor. The cofactor is Zn(2+).

It carries out the reaction RNA(n) + a ribonucleoside 5'-triphosphate = RNA(n+1) + diphosphate. In terms of biological role, DNA-dependent RNA polymerase catalyzes the transcription of DNA into RNA using the four ribonucleoside triphosphates as substrates. In Acidovorax ebreus (strain TPSY) (Diaphorobacter sp. (strain TPSY)), this protein is DNA-directed RNA polymerase subunit beta'.